We begin with the raw amino-acid sequence, 124 residues long: Small ribosomal subunit protein uS12 (124 aa).

At D89 the chain carries 3-methylthioaspartic acid. Residues 103-124 (DTAGVQKRRQGRSKYGAKRPKS) are disordered. Over residues 108–124 (QKRRQGRSKYGAKRPKS) the composition is skewed to basic residues.

It belongs to the universal ribosomal protein uS12 family. As to quaternary structure, part of the 30S ribosomal subunit. Contacts proteins S8 and S17. May interact with IF1 in the 30S initiation complex.

Functionally, with S4 and S5 plays an important role in translational accuracy. Interacts with and stabilizes bases of the 16S rRNA that are involved in tRNA selection in the A site and with the mRNA backbone. Located at the interface of the 30S and 50S subunits, it traverses the body of the 30S subunit contacting proteins on the other side and probably holding the rRNA structure together. The combined cluster of proteins S8, S12 and S17 appears to hold together the shoulder and platform of the 30S subunit. This is Small ribosomal subunit protein uS12 from Methylococcus capsulatus (strain ATCC 33009 / NCIMB 11132 / Bath).